Reading from the N-terminus, the 342-residue chain is Zinc transporter ZIP11 (342 aa).

Transmembrane regions (helical) follow at residues 12–32, 44–64, 72–92, 194–214, 263–285, 290–307, and 322–342; these read LLGT…VFIF, LGFA…APAV, GFGA…AAFV, IALL…AVGV, FWYG…FAVV, ILPY…YVVM, and LASW…VGLG.

It belongs to the ZIP transporter (TC 2.A.5) family. As to expression, highly expressed in the testes and portions of the digestive system including the stomach, ileum and cecum. In contrast, expressed at very low levels in liver, duodenum, jejunum, and colon.

It is found in the cell membrane. The protein resides in the nucleus. It localises to the cytoplasm. The protein localises to the golgi apparatus. The enzyme catalyses Zn(2+)(in) = Zn(2+)(out). It catalyses the reaction Cu(2+)(in) = Cu(2+)(out). Functionally, zinc importer that regulates cytosolic zinc concentration either via zinc influx from the extracellular compartment or efflux from intracellular organelles such as Golgi apparatus. May transport copper ions as well. The transport mechanism remains to be elucidated. This chain is Zinc transporter ZIP11 (Slc39a11), found in Mus musculus (Mouse).